Reading from the N-terminus, the 71-residue chain is Small ribosomal subunit protein bS21 (71 aa).

Over residues 48 to 59 (AKASAVKRHAKK) the composition is skewed to basic residues. A disordered region spans residues 48-71 (AKASAVKRHAKKLSRENARRIRLY). The span at 60–71 (LSRENARRIRLY) shows a compositional bias: basic and acidic residues.

Belongs to the bacterial ribosomal protein bS21 family.

The protein is Small ribosomal subunit protein bS21 of Aeromonas hydrophila subsp. hydrophila (strain ATCC 7966 / DSM 30187 / BCRC 13018 / CCUG 14551 / JCM 1027 / KCTC 2358 / NCIMB 9240 / NCTC 8049).